The sequence spans 418 residues: Glutamyl-tRNA reductase (418 aa).

Substrate-binding positions include 49–52 (TCNR), serine 109, 114–116 (EPQ), and glutamine 120. Residue cysteine 50 is the Nucleophile of the active site. NADP(+) is bound at residue 189 to 194 (GAGETI).

It belongs to the glutamyl-tRNA reductase family. Homodimer.

It carries out the reaction (S)-4-amino-5-oxopentanoate + tRNA(Glu) + NADP(+) = L-glutamyl-tRNA(Glu) + NADPH + H(+). It functions in the pathway porphyrin-containing compound metabolism; protoporphyrin-IX biosynthesis; 5-aminolevulinate from L-glutamyl-tRNA(Glu): step 1/2. In terms of biological role, catalyzes the NADPH-dependent reduction of glutamyl-tRNA(Glu) to glutamate 1-semialdehyde (GSA). This is Glutamyl-tRNA reductase from Salmonella choleraesuis (strain SC-B67).